The following is a 300-amino-acid chain: Protein phosphatase 2C 1 (300 aa).

Residues 23–298 (IFAASEMQGW…DNMTTILVYL (276 aa)) enclose the PPM-type phosphatase domain. Mn(2+) contacts are provided by D57, G58, D237, and D289.

This sequence belongs to the PP2C family. It depends on Mg(2+) as a cofactor. Mn(2+) serves as cofactor. Post-translationally, the N-terminus is blocked.

The protein resides in the membrane. The catalysed reaction is O-phospho-L-seryl-[protein] + H2O = L-seryl-[protein] + phosphate. The enzyme catalyses O-phospho-L-threonyl-[protein] + H2O = L-threonyl-[protein] + phosphate. Serine and threonine phosphatase. This is Protein phosphatase 2C 1 from Paramecium tetraurelia.